The following is a 672-amino-acid chain: Hydroxyproline O-galactosyltransferase GALT5 (672 aa).

At 1-28 (MKKPKLSKVEKIDKIDLFSSLWKQRSVR) the chain is on the cytoplasmic side. Residues 29–49 (VIMAIGFLYLVIVSVEIPLVF) form a helical; Signal-anchor for type II membrane protein membrane-spanning segment. The Lumenal portion of the chain corresponds to 50-672 (KSWSSSSVPL…QNKPECCNMR (623 aa)). The 202-residue stretch at 191–392 (KLMELPCGLT…DIDVHSVFVA (202 aa)) folds into the Galectin domain. Residues N306 and N620 are each glycosylated (N-linked (GlcNAc...) asparagine).

Belongs to the glycosyltransferase 31 family. Requires Mn(2+) as cofactor. In terms of tissue distribution, expressed in juvenile leaves, stems, cauline leaves and siliques.

The protein resides in the golgi apparatus membrane. The protein operates within protein modification; protein glycosylation. In terms of biological role, possesses hydroxyproline O-galactosyltransferase activity. Transfers galactose from UDP-galactose to hydroxyproline residues in the arabinogalactan proteins (AGPs). Is specific for AGPs containing non-contiguous peptidyl hydroxyproline residues. Utilizes UDP-galactose solely as sugar donor. The addition of galactose onto the peptidyl hydroxyproline residues in AGP core proteins represents the first committed step in arabinogalactan polysaccharide addition. AGP glycans play essential roles in both vegetative and reproductive plant growth. This Arabidopsis thaliana (Mouse-ear cress) protein is Hydroxyproline O-galactosyltransferase GALT5.